Reading from the N-terminus, the 374-residue chain is Regulator of G-protein signaling 20 (374 aa).

Residues Met-1 to Gly-11 are compositionally biased toward polar residues. Disordered stretches follow at residues Met-1–Arg-21 and Pro-135–Gly-158. The span at His-12–Arg-21 shows a compositional bias: basic residues. One can recognise an RGS domain in the interval Ser-248–Leu-364.

Forms a complex with G(alpha)z/i2 subunits and mu-opioid receptors; the formation of this complex results in mu-opioid receptor desensitization. Interacts with OPRM1. In terms of processing, fatty acylated. Heavily palmitoylated in the cysteine string motif. Post-translationally, N- and O-glycosylated in synapsomal membranes. Serine phosphorylated in synapsomal membranes. In terms of processing, sumoylated with SUMO1 and SUMO2 in synaptosomes. The sumoylated forms act as a scaffold for sequestering mu-opioid receptor-activated G(alpha) subunits. In terms of tissue distribution, retinal-specific. Expressed throughout the retina, including photoreceptors.

Its subcellular location is the membrane. It localises to the nucleus. The protein resides in the cytoplasm. Inhibits signal transduction by increasing the GTPase activity of G protein alpha subunits thereby driving them into their inactive GDP-bound form. Binds selectively to G(z)-alpha and G(alpha)-i2 subunits, accelerates their GTPase activity and regulates their signaling activities. The G(z)-alpha activity is inhibited by the phosphorylation and palmitoylation of the G-protein. Negatively regulates mu-opioid receptor-mediated activation of the G-proteins. In Bos taurus (Bovine), this protein is Regulator of G-protein signaling 20 (RGS20).